The chain runs to 148 residues: Natriuretic peptide BF131 (148 aa).

Residues 1 to 27 (MVGPSRLAGGGLLLLLLLALLPLALDG) form the signal peptide. Residues 28 to 83 (KPAPPPQALPKDPAAASAAERIMRALLPDSKSSRPATDRMVHPEHQAGGGDTRRLQ) constitute a propeptide that is removed on maturation. 2 disordered regions span residues 54–83 (LPDS…RRLQ) and 105–127 (TSDM…PSAA). Positions 63 to 83 (ATDRMVHPEHQAGGGDTRRLQ) are enriched in basic and acidic residues. A disulfide bridge links cysteine 94 with cysteine 110. A propeptide spanning residues 130-148 (AVTWLIRDLRADSKQSRAA) is cleaved from the precursor.

Belongs to the natriuretic peptide family. Expressed by the venom gland.

It localises to the secreted. In terms of biological role, natriuretic peptide that dose-dependently induces the rapid relaxation of rat aortic strips phenylephrine-precontracted. Acts by stimulating cGMP production in a dose-dependent manner (by probably activating NPR1 and/or NPR2). May also show potent hypotensive effects. The chain is Natriuretic peptide BF131 from Bungarus flaviceps flaviceps (Red-headed krait).